Here is a 693-residue protein sequence, read N- to C-terminus: MA3 DOMAIN-CONTAINING TRANSLATION REGULATORY FACTOR 2 (693 aa).

The tract at residues 25–60 (SLDPLPQANMAEDLTKSRRHSPIKVEGSEETWGVED) is disordered. One can recognise an MI 1 domain in the interval 90–211 (EYKKKATVIV…PPAFLKKQMK (122 aa)). The short motif at 241 to 248 (EKRWGGTD) is the Nuclear localization signal 1 element. 3 MI domains span residues 254 to 375 (DVKA…SLSA), 389 to 510 (VFKD…EVLN), and 560 to 681 (EVKE…EDSQ). The short motif at 430-437 (VKYLITLA) is the Nuclear localization signal 2 element. Residues 673 to 693 (ESFASEDSQSKKQNGSSSSSG) are disordered. Positions 683-693 (KKQNGSSSSSG) are enriched in low complexity.

The protein belongs to the PDCD4 family. In terms of assembly, binds to EIF4A1. The association with ribosomes is modulated by cellular energy status and TOR activity. Mostly expressed in reproductive tissues, such as flower buds and flowers, and, to a lower extent, in vegetative tissues, such as leaves, roots and stems.

The protein localises to the nucleus. The protein resides in the cytoplasm. It localises to the cytosol. Involved in target of rapamycin (TOR)-regulated translation control, especially under energy-deficient conditions. The protein is MA3 DOMAIN-CONTAINING TRANSLATION REGULATORY FACTOR 2 of Arabidopsis thaliana (Mouse-ear cress).